The chain runs to 379 residues: UDP-N-acetylglucosamine--N-acetylmuramyl-(pentapeptide) pyrophosphoryl-undecaprenol N-acetylglucosamine transferase (379 aa).

UDP-N-acetyl-alpha-D-glucosamine contacts are provided by residues Thr-10–Gly-12, Asn-124, Arg-161, Ser-195, and Gln-291.

It belongs to the glycosyltransferase 28 family. MurG subfamily.

Its subcellular location is the cell membrane. It carries out the reaction di-trans,octa-cis-undecaprenyl diphospho-N-acetyl-alpha-D-muramoyl-L-alanyl-D-glutamyl-meso-2,6-diaminopimeloyl-D-alanyl-D-alanine + UDP-N-acetyl-alpha-D-glucosamine = di-trans,octa-cis-undecaprenyl diphospho-[N-acetyl-alpha-D-glucosaminyl-(1-&gt;4)]-N-acetyl-alpha-D-muramoyl-L-alanyl-D-glutamyl-meso-2,6-diaminopimeloyl-D-alanyl-D-alanine + UDP + H(+). It participates in cell wall biogenesis; peptidoglycan biosynthesis. Functionally, cell wall formation. Catalyzes the transfer of a GlcNAc subunit on undecaprenyl-pyrophosphoryl-MurNAc-pentapeptide (lipid intermediate I) to form undecaprenyl-pyrophosphoryl-MurNAc-(pentapeptide)GlcNAc (lipid intermediate II). This is UDP-N-acetylglucosamine--N-acetylmuramyl-(pentapeptide) pyrophosphoryl-undecaprenol N-acetylglucosamine transferase from Thermobifida fusca (strain YX).